The sequence spans 484 residues: Siroheme synthase 1 (484 aa).

The segment at 1–205 (MHHYPIFLKL…GREAEGEAEL (205 aa)) is precorrin-2 dehydrogenase /sirohydrochlorin ferrochelatase. NAD(+) is bound by residues 22-23 (EA) and 43-44 (PV). A Phosphoserine modification is found at Ser-130. The uroporphyrinogen-III C-methyltransferase stretch occupies residues 220 to 484 (GEVFLVGAGP…DPCWTGGMRD (265 aa)). Residue Pro-229 coordinates S-adenosyl-L-methionine. The Proton acceptor role is filled by Asp-252. The active-site Proton donor is Lys-274. S-adenosyl-L-methionine-binding positions include 305–307 (GGD), Leu-310, 335–336 (SA), Met-387, and Ala-416.

It in the N-terminal section; belongs to the precorrin-2 dehydrogenase / sirohydrochlorin ferrochelatase family. In the C-terminal section; belongs to the precorrin methyltransferase family.

The enzyme catalyses uroporphyrinogen III + 2 S-adenosyl-L-methionine = precorrin-2 + 2 S-adenosyl-L-homocysteine + H(+). The catalysed reaction is precorrin-2 + NAD(+) = sirohydrochlorin + NADH + 2 H(+). It catalyses the reaction siroheme + 2 H(+) = sirohydrochlorin + Fe(2+). It functions in the pathway cofactor biosynthesis; adenosylcobalamin biosynthesis; precorrin-2 from uroporphyrinogen III: step 1/1. It participates in cofactor biosynthesis; adenosylcobalamin biosynthesis; sirohydrochlorin from precorrin-2: step 1/1. The protein operates within porphyrin-containing compound metabolism; siroheme biosynthesis; precorrin-2 from uroporphyrinogen III: step 1/1. Its pathway is porphyrin-containing compound metabolism; siroheme biosynthesis; siroheme from sirohydrochlorin: step 1/1. It functions in the pathway porphyrin-containing compound metabolism; siroheme biosynthesis; sirohydrochlorin from precorrin-2: step 1/1. Its function is as follows. Multifunctional enzyme that catalyzes the SAM-dependent methylations of uroporphyrinogen III at position C-2 and C-7 to form precorrin-2 via precorrin-1. Then it catalyzes the NAD-dependent ring dehydrogenation of precorrin-2 to yield sirohydrochlorin. Finally, it catalyzes the ferrochelation of sirohydrochlorin to yield siroheme. This is Siroheme synthase 1 from Halorhodospira halophila (strain DSM 244 / SL1) (Ectothiorhodospira halophila (strain DSM 244 / SL1)).